A 479-amino-acid chain; its full sequence is Aspartyl/glutamyl-tRNA(Asn/Gln) amidotransferase subunit B (479 aa).

This sequence belongs to the GatB/GatE family. GatB subfamily. Heterotrimer of A, B and C subunits.

The catalysed reaction is L-glutamyl-tRNA(Gln) + L-glutamine + ATP + H2O = L-glutaminyl-tRNA(Gln) + L-glutamate + ADP + phosphate + H(+). It carries out the reaction L-aspartyl-tRNA(Asn) + L-glutamine + ATP + H2O = L-asparaginyl-tRNA(Asn) + L-glutamate + ADP + phosphate + 2 H(+). Its function is as follows. Allows the formation of correctly charged Asn-tRNA(Asn) or Gln-tRNA(Gln) through the transamidation of misacylated Asp-tRNA(Asn) or Glu-tRNA(Gln) in organisms which lack either or both of asparaginyl-tRNA or glutaminyl-tRNA synthetases. The reaction takes place in the presence of glutamine and ATP through an activated phospho-Asp-tRNA(Asn) or phospho-Glu-tRNA(Gln). In Streptococcus mutans serotype c (strain ATCC 700610 / UA159), this protein is Aspartyl/glutamyl-tRNA(Asn/Gln) amidotransferase subunit B.